Reading from the N-terminus, the 414-residue chain is Gamma-glutamyl phosphate reductase (414 aa).

The protein belongs to the gamma-glutamyl phosphate reductase family.

Its subcellular location is the cytoplasm. It catalyses the reaction L-glutamate 5-semialdehyde + phosphate + NADP(+) = L-glutamyl 5-phosphate + NADPH + H(+). The protein operates within amino-acid biosynthesis; L-proline biosynthesis; L-glutamate 5-semialdehyde from L-glutamate: step 2/2. Catalyzes the NADPH-dependent reduction of L-glutamate 5-phosphate into L-glutamate 5-semialdehyde and phosphate. The product spontaneously undergoes cyclization to form 1-pyrroline-5-carboxylate. The polypeptide is Gamma-glutamyl phosphate reductase (Xanthomonas campestris pv. campestris (strain ATCC 33913 / DSM 3586 / NCPPB 528 / LMG 568 / P 25)).